The chain runs to 341 residues: Methionine import ATP-binding protein MetN (341 aa).

In terms of domain architecture, ABC transporter spans 2–237 (IELCGLKKSF…PESLARKMLY (236 aa)). 34 to 41 (GKSGAGKS) contacts ATP.

It belongs to the ABC transporter superfamily. Methionine importer (TC 3.A.1.24) family. The complex is composed of two ATP-binding proteins (MetN), two transmembrane proteins (MetI) and a solute-binding protein (MetQ).

Its subcellular location is the cell inner membrane. The catalysed reaction is L-methionine(out) + ATP + H2O = L-methionine(in) + ADP + phosphate + H(+). It carries out the reaction D-methionine(out) + ATP + H2O = D-methionine(in) + ADP + phosphate + H(+). Part of the ABC transporter complex MetNIQ involved in methionine import. Responsible for energy coupling to the transport system. The protein is Methionine import ATP-binding protein MetN of Legionella pneumophila (strain Paris).